A 180-amino-acid polypeptide reads, in one-letter code: Immediate early response gene 2 protein (180 aa).

A disordered region spans residues 53-135 (MSEKSGQSVT…KRRSKTATDS (83 aa)). A compositionally biased stretch (polar residues) spans 56-92 (KSGQSVTEECTSHTQEPMDTSSSTATPLRETSGQSSE). A compositionally biased stretch (basic and acidic residues) spans 93–103 (DGQRSGLEGHP).

It belongs to the IER family. As to quaternary structure, interacts with FIBPB.

It localises to the nucleus. Its subcellular location is the cytoplasm. DNA-binding protein that seems to act as a transcription factor. Mediates with FIBPB FGF-signaling in Kupffer's vesicle ciliogenesis and in the establishment of laterality in the embryo. The chain is Immediate early response gene 2 protein from Danio rerio (Zebrafish).